A 249-amino-acid polypeptide reads, in one-letter code: 5'-nucleotidase SurE (249 aa).

The a divalent metal cation site is built by aspartate 9, aspartate 10, serine 40, and asparagine 92.

This sequence belongs to the SurE nucleotidase family. Requires a divalent metal cation as cofactor.

The protein resides in the cytoplasm. It carries out the reaction a ribonucleoside 5'-phosphate + H2O = a ribonucleoside + phosphate. In terms of biological role, nucleotidase that shows phosphatase activity on nucleoside 5'-monophosphates. This is 5'-nucleotidase SurE from Shewanella baltica (strain OS223).